An 870-amino-acid polypeptide reads, in one-letter code: Leucine--tRNA ligase (870 aa).

A 'HIGH' region motif is present at residues 55–65; the sequence is PYPSGTLHMGH. Residues 626 to 630 carry the 'KMSKS' region motif; it reads KMSKS. Lys-629 lines the ATP pocket.

This sequence belongs to the class-I aminoacyl-tRNA synthetase family.

The protein localises to the cytoplasm. It catalyses the reaction tRNA(Leu) + L-leucine + ATP = L-leucyl-tRNA(Leu) + AMP + diphosphate. In Prochlorococcus marinus (strain SARG / CCMP1375 / SS120), this protein is Leucine--tRNA ligase.